The chain runs to 421 residues: BEN domain-containing protein 5 (421 aa).

Lysine 133 carries the N6-acetyllysine modification. A coiled-coil region spans residues 180-243 (RALYEELLRN…LNRRLQDVLL (64 aa)). Lysine 258 is covalently cross-linked (Glycyl lysine isopeptide (Lys-Gly) (interchain with G-Cter in SUMO2)). Residues 302–408 (GSGIWVDEEK…EKIMDINKSC (107 aa)) form the BEN domain.

In terms of biological role, acts as a transcriptional repressor. The sequence is that of BEN domain-containing protein 5 (Bend5) from Mus musculus (Mouse).